Here is a 347-residue protein sequence, read N- to C-terminus: Protein RecA (347 aa).

ATP is bound at residue 64-71 (GPESSGKT).

This sequence belongs to the RecA family.

The protein resides in the cytoplasm. Its function is as follows. Can catalyze the hydrolysis of ATP in the presence of single-stranded DNA, the ATP-dependent uptake of single-stranded DNA by duplex DNA, and the ATP-dependent hybridization of homologous single-stranded DNAs. It interacts with LexA causing its activation and leading to its autocatalytic cleavage. The sequence is that of Protein RecA from Bartonella quintana (strain Toulouse) (Rochalimaea quintana).